Reading from the N-terminus, the 95-residue chain is Small ribosomal subunit protein uS19 (95 aa).

Residues Glu73–Lys95 form a disordered region.

Belongs to the universal ribosomal protein uS19 family.

Functionally, protein S19 forms a complex with S13 that binds strongly to the 16S ribosomal RNA. The protein is Small ribosomal subunit protein uS19 of Deinococcus geothermalis (strain DSM 11300 / CIP 105573 / AG-3a).